An 865-amino-acid polypeptide reads, in one-letter code: Probable beta-glucosidase J (865 aa).

The active site involves D233. N-linked (GlcNAc...) asparagine glycosylation is found at N330, N447, N503, and N764. Residues 411–579 (TGQPGYTFRV…DTDTAIQQAV (169 aa)) form the PA14 domain.

The protein belongs to the glycosyl hydrolase 3 family.

The protein localises to the secreted. It carries out the reaction Hydrolysis of terminal, non-reducing beta-D-glucosyl residues with release of beta-D-glucose.. Its pathway is glycan metabolism; cellulose degradation. Functionally, beta-glucosidases are one of a number of cellulolytic enzymes involved in the degradation of cellulosic biomass. Catalyzes the last step releasing glucose from the inhibitory cellobiose. The polypeptide is Probable beta-glucosidase J (bglJ) (Aspergillus fumigatus (strain CBS 144.89 / FGSC A1163 / CEA10) (Neosartorya fumigata)).